The primary structure comprises 258 residues: Glutathione S-transferase DHAR3, chloroplastic (258 aa).

Residues 1–42 (MISLRFQPSTTAGVLSASVSRAGFIKRCGSTKPGRVGRFVTM) constitute a chloroplast transit peptide. Position 52 is an S-glutathionyl cysteine (cysteine 52). Glutathione contacts are provided by lysine 54 and aspartate 65. Residues lysine 54 and aspartate 65 each contribute to the L-ascorbate site. A GST N-terminal domain is found at 56 to 129 (SITTPNKLGD…DVITQALEEK (74 aa)). Cysteine 66 functions as the Nucleophile in the catalytic mechanism. Residues cysteine 66 and cysteine 69 are joined by a disulfide bond. The short motif at 66–71 (CPFCQK) is the Glutathione-binding element. Glutathione is bound by residues lysine 93, valine 106, serine 119, histidine 205, and tryptophan 252. The 129-residue stretch at 130–258 (YPEPPLATPP…IAGWRPKVMG (129 aa)) folds into the GST C-terminal domain. Residue lysine 255 participates in L-ascorbate binding.

Belongs to the GST superfamily. DHAR family. Monomer. Interacts with TRX3. Post-translationally, partial S-glutathionylation and intramolecular disulfide bond formation between Cys-66 and Cys-69 in the presence of oxidized glutathione (GSSG). Could be reduced by TRX-dependent process.

It is found in the plastid. The protein localises to the chloroplast stroma. The enzyme catalyses RX + glutathione = an S-substituted glutathione + a halide anion + H(+). It carries out the reaction L-dehydroascorbate + 2 glutathione = glutathione disulfide + L-ascorbate. Functionally, displays a dual function. As a soluble protein, exhibits glutathione-dependent thiol transferase and dehydroascorbate (DHA) reductase activities. Key component of the ascorbate recycling system. Involved in the redox homeostasis, especially in scavenging of ROS under oxidative stresses. The polypeptide is Glutathione S-transferase DHAR3, chloroplastic (DHAR3) (Arabidopsis thaliana (Mouse-ear cress)).